Consider the following 156-residue polypeptide: Cell division protein SepF (156 aa).

The segment at proline 17–serine 44 is disordered.

The protein belongs to the SepF family. As to quaternary structure, homodimer. Interacts with FtsZ.

It localises to the cytoplasm. Cell division protein that is part of the divisome complex and is recruited early to the Z-ring. Probably stimulates Z-ring formation, perhaps through the cross-linking of FtsZ protofilaments. Its function overlaps with FtsA. This chain is Cell division protein SepF, found in Limosilactobacillus fermentum (strain NBRC 3956 / LMG 18251) (Lactobacillus fermentum).